A 351-amino-acid polypeptide reads, in one-letter code: Glycerol-3-phosphate dehydrogenase 1-like protein (351 aa).

Position 12-17 (12-17 (GSGNWG)) interacts with NAD(+). K122 serves as a coordination point for substrate. Position 155 (A155) interacts with NAD(+). The active-site Proton acceptor is the K206. Residues R271, K298, and Q300 each contribute to the NAD(+) site. Residue 271–272 (RN) coordinates substrate.

Belongs to the NAD-dependent glycerol-3-phosphate dehydrogenase family. In terms of assembly, interacts with SCN5A.

The protein localises to the cytoplasm. It catalyses the reaction sn-glycerol 3-phosphate + NAD(+) = dihydroxyacetone phosphate + NADH + H(+). In terms of biological role, plays a role in regulating cardiac sodium current; decreased enzymatic activity with resulting increased levels of glycerol 3-phosphate activating the DPD1L-dependent SCN5A phosphorylation pathway, may ultimately lead to decreased sodium current; cardiac sodium current may also be reduced due to alterations of NAD(H) balance induced by DPD1L. In Mus musculus (Mouse), this protein is Glycerol-3-phosphate dehydrogenase 1-like protein (Gpd1l).